Reading from the N-terminus, the 427-residue chain is Glutamate-1-semialdehyde 2,1-aminomutase (427 aa).

K267 carries the post-translational modification N6-(pyridoxal phosphate)lysine.

The protein belongs to the class-III pyridoxal-phosphate-dependent aminotransferase family. HemL subfamily. As to quaternary structure, homodimer. Pyridoxal 5'-phosphate serves as cofactor.

The protein localises to the cytoplasm. It carries out the reaction (S)-4-amino-5-oxopentanoate = 5-aminolevulinate. It functions in the pathway porphyrin-containing compound metabolism; protoporphyrin-IX biosynthesis; 5-aminolevulinate from L-glutamyl-tRNA(Glu): step 2/2. The sequence is that of Glutamate-1-semialdehyde 2,1-aminomutase from Acetivibrio thermocellus (strain ATCC 27405 / DSM 1237 / JCM 9322 / NBRC 103400 / NCIMB 10682 / NRRL B-4536 / VPI 7372) (Clostridium thermocellum).